We begin with the raw amino-acid sequence, 31 residues long: Cyclotide mden-K (31 aa).

Residues 1–31 (GSIPCGESCVWIPCISSVVGCACKNKVCYKN) constitute a cross-link (cyclopeptide (Gly-Asn)). Disulfide bonds link Cys5-Cys21, Cys9-Cys23, and Cys14-Cys28.

It belongs to the cyclotide family. Bracelet subfamily. Post-translationally, this is a cyclic peptide.

Functionally, probably participates in a plant defense mechanism. This is Cyclotide mden-K from Melicytus dentatus (Tree violet).